The following is a 497-amino-acid chain: Glycerol kinase (497 aa).

Residue Thr-11 participates in ADP binding. Positions 11, 12, and 13 each coordinate ATP. Thr-11 lines the sn-glycerol 3-phosphate pocket. Residue Arg-15 coordinates ADP. 4 residues coordinate sn-glycerol 3-phosphate: Arg-81, Glu-82, Tyr-133, and Asp-242. Arg-81, Glu-82, Tyr-133, Asp-242, and Gln-243 together coordinate glycerol. ADP is bound by residues Thr-264 and Gly-306. Residues Thr-264, Gly-306, Gln-310, and Gly-407 each contribute to the ATP site. ADP contacts are provided by Gly-407 and Asn-411.

The protein belongs to the FGGY kinase family.

The enzyme catalyses glycerol + ATP = sn-glycerol 3-phosphate + ADP + H(+). The protein operates within polyol metabolism; glycerol degradation via glycerol kinase pathway; sn-glycerol 3-phosphate from glycerol: step 1/1. Its activity is regulated as follows. Inhibited by fructose 1,6-bisphosphate (FBP). Its function is as follows. Key enzyme in the regulation of glycerol uptake and metabolism. Catalyzes the phosphorylation of glycerol to yield sn-glycerol 3-phosphate. This is Glycerol kinase from Alcanivorax borkumensis (strain ATCC 700651 / DSM 11573 / NCIMB 13689 / SK2).